A 472-amino-acid polypeptide reads, in one-letter code: PEP-dependent dihydroxyacetone kinase, phosphoryl donor subunit DhaM (472 aa).

The region spanning 1-135 is the PTS EIIA type-4 domain; that stretch reads MVNLVIVSHS…NALEAKRVQL (135 aa). The active-site Tele-phosphohistidine intermediate is H9. The 88-residue stretch at 156–243 folds into the HPr domain; the sequence is ARSVSVVIQN…ALAAENFGEP (88 aa). H170 functions as the Pros-phosphohistidine intermediate in the catalytic mechanism. Residues 266–472 are PTS EI-like, N-terminal part; that stretch reads PQPQDRISRE…DIPGKRVIRG (207 aa). The Tele-phosphohistidine intermediate role is filled by H432.

Belongs to the PEP-utilizing enzyme family. Homodimer. The dihydroxyacetone kinase complex is composed of a homodimer of DhaM, a homodimer of DhaK and the subunit DhaL.

The catalysed reaction is dihydroxyacetone + phosphoenolpyruvate = dihydroxyacetone phosphate + pyruvate. Its function is as follows. Component of the dihydroxyacetone kinase complex, which is responsible for the phosphoenolpyruvate (PEP)-dependent phosphorylation of dihydroxyacetone. DhaM serves as the phosphoryl donor. Is phosphorylated by phosphoenolpyruvate in an EI- and HPr-dependent reaction, and a phosphorelay system on histidine residues finally leads to phosphoryl transfer to DhaL and dihydroxyacetone. This chain is PEP-dependent dihydroxyacetone kinase, phosphoryl donor subunit DhaM, found in Klebsiella michiganensis (strain ATCC 8724 / DSM 4798 / JCM 20051 / NBRC 3318 / NRRL B-199 / KCTC 1686 / BUCSAV 143 / CCM 1901).